We begin with the raw amino-acid sequence, 223 residues long: MGQKVNPNGIRLGYIRDWRSTWYADSSRYATKLNEDIKVREFLHKKLAAAAVSKIQIERPAQNAKITIHTARPGIVIGKKGEDVEKLRAEVHKLMGIPVQINIEEVRKPEIDAKLVAESVAQQLEKRVMFRRAMKKAMQAAMKSGAKGIKIMVSGRLGGAEIARSEWARDGRVPLQTFRADVDYATAEALTTYGVIGVKVWIYKGEILPGQIAEKKNNKKGAK.

The KH type-2 domain maps to V39–R107.

This sequence belongs to the universal ribosomal protein uS3 family. As to quaternary structure, part of the 30S ribosomal subunit. Forms a tight complex with proteins S10 and S14.

In terms of biological role, binds the lower part of the 30S subunit head. Binds mRNA in the 70S ribosome, positioning it for translation. The sequence is that of Small ribosomal subunit protein uS3 from Francisella tularensis subsp. holarctica (strain FTNF002-00 / FTA).